The sequence spans 269 residues: Cytolethal distending toxin subunit B homolog (269 aa).

Residues 1 to 22 form the signal peptide; it reads MKKPVFFLLTMIICSYISFACA.

It localises to the secreted. Its function is as follows. Produces a CDT (cytolethal distending toxin) activity, which causes DNA damage in intoxicated cells. This damage induces G2/M cell cycle arrest, chromatin fragmentation, cell distention and nucleus enlargement. This is Cytolethal distending toxin subunit B homolog (cdtB) from Salmonella typhi.